A 484-amino-acid chain; its full sequence is Poly(A) polymerase alpha-B (484 aa).

Positions 240 to 257 (RKQLHQLLPSHVLPKKKK) match the Nuclear localization signal 1 motif. 3 disordered regions span residues 276–314 (SVDS…PVSL), 326–356 (VPQN…SSTP), and 375–484 (KPVT…RLNR). The Nuclear localization signal 2 signature appears at 392–407 (KRTSSPTNEESPKKTK). Residues 423–441 (EQNKLEPEELKEVHSEEKS) show a composition bias toward basic and acidic residues. Residues 451-464 (SSQRSSSTDLSDIS) are compositionally biased toward low complexity.

Belongs to the poly(A) polymerase family. Monomer.

The protein resides in the nucleus. It carries out the reaction RNA(n) + ATP = RNA(n)-3'-adenine ribonucleotide + diphosphate. Functionally, polymerase that creates the 3'-poly(A) tail of mRNA's. May acquire specificity through interaction with a cleavage and polyadenylation factor (CPSF). The chain is Poly(A) polymerase alpha-B (papola-b) from Xenopus laevis (African clawed frog).